The following is a 651-amino-acid chain: Coronin-like protein (651 aa).

WD repeat units follow at residues 79 to 110, 138 to 169, 180 to 210, and 226 to 257; these read GHTAQVLDTDFDPFNDHRIASGSDDSKIGIWD, GHARKVGHVLYHPVAENVLASSSGDYTVKLWN, KHPDMVTSMSFSYDGNYLATVARDKKLRVWN, and AKNQRVVWLGNSDRLATTGFSKLSDRQIGIWD. The disordered stretch occupies residues 408–609; that stretch reads APSFHEAKRP…TSPKSLGLKK (202 aa). The span at 427–451 shows a compositional bias: basic and acidic residues; the sequence is LEEKKEQPKVEKPISESEKEVKQEA. A phosphoserine mark is found at serine 441, serine 454, and serine 456. The span at 452–465 shows a compositional bias: low complexity; the sequence is PKSPSPLKSASSSS. Residues threonine 517 and threonine 529 each carry the phosphothreonine modification. Composition is skewed to basic and acidic residues over residues 523–540 and 547–572; these read ETKKDRTPKVEPSKELKP and TDRKQEQSLPQEEKSSEKTKSPEQEK. Phosphoserine occurs at positions 573 and 579. Residues 578–590 are compositionally biased toward low complexity; sequence SSITAAKTAITAS. Positions 618–650 form a coiled coil; the sequence is VLQLEDVVDKLTKANLDKDERLLKLEQKIGELS.

Belongs to the WD repeat coronin family. As to quaternary structure, binds to F-actin.

The sequence is that of Coronin-like protein (CRN1) from Saccharomyces cerevisiae (strain ATCC 204508 / S288c) (Baker's yeast).